A 347-amino-acid polypeptide reads, in one-letter code: NADH-ubiquinone oxidoreductase chain 2 (347 aa).

The next 9 membrane-spanning stretches (helical) occupy residues Pro-3–Ser-23, His-25–Met-45, Tyr-59–Leu-79, Phe-111–Leu-131, Ile-149–Gly-169, Leu-200–Met-220, Leu-242–Pro-262, Asn-274–Met-294, and Leu-325–Ile-345.

Belongs to the complex I subunit 2 family. Core subunit of respiratory chain NADH dehydrogenase (Complex I) which is composed of 45 different subunits. Interacts with TMEM242.

The protein resides in the mitochondrion inner membrane. It catalyses the reaction a ubiquinone + NADH + 5 H(+)(in) = a ubiquinol + NAD(+) + 4 H(+)(out). In terms of biological role, core subunit of the mitochondrial membrane respiratory chain NADH dehydrogenase (Complex I) which catalyzes electron transfer from NADH through the respiratory chain, using ubiquinone as an electron acceptor. Essential for the catalytic activity and assembly of complex I. This Ailurus fulgens (Himalayan red panda) protein is NADH-ubiquinone oxidoreductase chain 2.